The chain runs to 635 residues: DNA mismatch repair protein MutL (635 aa).

Residues 359-399 (GTNKYAQPEAAKSSAAEQAVARERSSARERAAPAYKEDHPY) form a disordered region. Positions 364–377 (AQPEAAKSSAAEQA) are enriched in low complexity. A compositionally biased stretch (basic and acidic residues) spans 378–399 (VARERSSARERAAPAYKEDHPY).

It belongs to the DNA mismatch repair MutL/HexB family.

Functionally, this protein is involved in the repair of mismatches in DNA. It is required for dam-dependent methyl-directed DNA mismatch repair. May act as a 'molecular matchmaker', a protein that promotes the formation of a stable complex between two or more DNA-binding proteins in an ATP-dependent manner without itself being part of a final effector complex. In Yersinia pestis bv. Antiqua (strain Antiqua), this protein is DNA mismatch repair protein MutL.